We begin with the raw amino-acid sequence, 399 residues long: MIPLLFILFYFTNCIEWHKFETSEEIISTYLIDDVLYTGVNGAVYTFSNNELNKTGLTNNNNYITTSIKVEDTLVCGTNNGNPKCWKIDGSEDPKYRGRGYAPYQNSKVTIISHNECVLSDINISKEGIKRWRRFDGPCGYDLYTADNVIPKDGVRGAFVDKDGTYDKVYILFTDTIDTKRIVKIPYIAQMCLNDEGGPSSLSSHRWSTFLKVELECDIDGRSYRQIIHSKAIKTDNDTILYVFFDSPYSKSALCTYSMNAIKHSFSTSKLGGYTKQLPSPAPGICLPAGKVVPHTTFDIIEQYNELDDIIKPLSQPIFEGPSGVKWFDIKEKENEHREYRIYFIKENTIYSFDTKSKQTRSAQVDARLFSVMVTSKPLFIADIGIGVGIPRMKKILKM.

The first 14 residues, 1 to 14, serve as a signal peptide directing secretion; it reads MIPLLFILFYFTNC. In terms of domain architecture, Sema spans 15–399; that stretch reads IEWHKFETSE…IPRMKKILKM (385 aa).

It belongs to the semaphorin family. Interacts with host VESPR.

It localises to the secreted. Its function is as follows. Acts as a semaphorin-like protein and binds to host plexin C1 receptor. May alter the movement of plexin C1-expressing cells including dendritic cells, monocytes, or granulocytes in the proximity of infected cells. May also regulate host cell cytoskeleton of neighboring cells to improve viral infection. This is Semaphorin-like protein 139 (EVM139) from Ectromelia virus (strain Moscow) (ECTV).